Consider the following 152-residue polypeptide: Holo-[acyl-carrier-protein] synthase (152 aa).

D7 and E60 together coordinate Mg(2+).

It belongs to the P-Pant transferase superfamily. AcpS family. Requires Mg(2+) as cofactor.

Its subcellular location is the cytoplasm. It catalyses the reaction apo-[ACP] + CoA = holo-[ACP] + adenosine 3',5'-bisphosphate + H(+). Functionally, transfers the 4'-phosphopantetheine moiety from coenzyme A to a Ser of acyl-carrier-protein. The chain is Holo-[acyl-carrier-protein] synthase from Bifidobacterium adolescentis (strain ATCC 15703 / DSM 20083 / NCTC 11814 / E194a).